The primary structure comprises 497 residues: Signal recognition particle receptor FtsY (497 aa).

Disordered stretches follow at residues 1-63 and 79-130; these read MAKE…TEAE and AESE…EWQA. The span at 87–96 shows a compositional bias: low complexity; the sequence is EAEVVAQPEP. GTP contacts are provided by residues 300-307, 382-386, and 446-449; these read GVNGVGKT, DTAGR, and TKLD.

This sequence belongs to the GTP-binding SRP family. FtsY subfamily. In terms of assembly, part of the signal recognition particle protein translocation system, which is composed of SRP and FtsY. SRP is a ribonucleoprotein composed of Ffh and a 4.5S RNA molecule. Binds to SecY. Proteolytically cleaved. The cleavage may regulate function and subcellular location of FtsY. Full-length FtsY is found primarily associated with the membrane, while cleaved protein is predominantly present in the cytoplasm.

It is found in the cell inner membrane. The protein resides in the cytoplasm. The enzyme catalyses GTP + H2O = GDP + phosphate + H(+). With respect to regulation, conformation of the Ffh-FtsY complex and regulation of its GTPase activity are modulated by the 4.5S RNA. Formation of the FfH-FtsY complex leads to a mutual stimulation of both GTPases. In terms of biological role, involved in targeting and insertion of nascent membrane proteins into the cytoplasmic membrane. Acts as a receptor for the complex formed by the signal recognition particle (SRP) and the ribosome-nascent chain (RNC). Interaction with SRP-RNC leads to the transfer of the RNC complex to the Sec translocase for insertion into the membrane, the hydrolysis of GTP by both Ffh and FtsY, and the dissociation of the SRP-FtsY complex into the individual components. The sequence is that of Signal recognition particle receptor FtsY from Escherichia coli (strain K12).